We begin with the raw amino-acid sequence, 128 residues long: Large ribosomal subunit protein bL17 (128 aa).

It belongs to the bacterial ribosomal protein bL17 family. As to quaternary structure, part of the 50S ribosomal subunit. Contacts protein L32.

The sequence is that of Large ribosomal subunit protein bL17 from Hydrogenovibrio crunogenus (strain DSM 25203 / XCL-2) (Thiomicrospira crunogena).